The primary structure comprises 356 residues: Phospho-N-acetylmuramoyl-pentapeptide-transferase (356 aa).

A run of 10 helical transmembrane segments spans residues 25–45 (TIAA…SIIA), 70–90 (GTPT…AFLW), 93–113 (LSNI…AIGF), 138–158 (FFVA…GFAL), 164–184 (YLIH…VATG), 195–215 (GLAI…AYLC), 235–255 (LAVL…FNAP), 258–278 (AIFM…TVAV), 284–304 (IVLV…VIQV), and 333–353 (QVVI…LSTL).

It belongs to the glycosyltransferase 4 family. MraY subfamily. The cofactor is Mg(2+).

The protein localises to the cell inner membrane. It carries out the reaction UDP-N-acetyl-alpha-D-muramoyl-L-alanyl-gamma-D-glutamyl-meso-2,6-diaminopimeloyl-D-alanyl-D-alanine + di-trans,octa-cis-undecaprenyl phosphate = di-trans,octa-cis-undecaprenyl diphospho-N-acetyl-alpha-D-muramoyl-L-alanyl-D-glutamyl-meso-2,6-diaminopimeloyl-D-alanyl-D-alanine + UMP. It participates in cell wall biogenesis; peptidoglycan biosynthesis. In terms of biological role, catalyzes the initial step of the lipid cycle reactions in the biosynthesis of the cell wall peptidoglycan: transfers peptidoglycan precursor phospho-MurNAc-pentapeptide from UDP-MurNAc-pentapeptide onto the lipid carrier undecaprenyl phosphate, yielding undecaprenyl-pyrophosphoryl-MurNAc-pentapeptide, known as lipid I. This chain is Phospho-N-acetylmuramoyl-pentapeptide-transferase, found in Bartonella tribocorum (strain CIP 105476 / IBS 506).